A 333-amino-acid chain; its full sequence is Cell division protein FtsQ (333 aa).

Residues 1–99 (MTGTGPHGDP…ARREAKRRAV (99 aa)) form a disordered region. The Cytoplasmic segment spans residues 1-118 (MTGTGPHGDP…VPRNTIRGLK (118 aa)). Over residues 11 to 22 (AEDPAGPDDTAA) the composition is skewed to acidic residues. Low complexity predominate over residues 44-57 (TTETTAQTGTTAEA). Basic and acidic residues predominate over residues 73–92 (ERAERRAARDRAMAIEQARR). Residues 119–139 (VLMWAALVSVLAVALGLLLYF) form a helical membrane-spanning segment. The Extracellular segment spans residues 140 to 333 (TPIMSARNVE…VSSPDLPTVK (194 aa)). Positions 143–211 (MSARNVEVSG…STLKISIVER (69 aa)) constitute a POTRA domain.

The protein belongs to the FtsQ/DivIB family. FtsQ subfamily.

Its subcellular location is the cell membrane. Functionally, essential cell division protein. This is Cell division protein FtsQ from Mycolicibacterium smegmatis (strain ATCC 700084 / mc(2)155) (Mycobacterium smegmatis).